A 409-amino-acid chain; its full sequence is Mitochondrial import inner membrane translocase subunit TIM50-B (409 aa).

Residues 1–42 (MSLIAIERVLCGWPKICRKLIVTSRSLTSGLRRALVKQPRKG) constitute a mitochondrion transit peptide. Topologically, residues 43–127 (GDVGKPGMEL…ELERAFRRMK (85 aa)) are mitochondrial matrix. The tract at residues 93–114 (PQTSEESNDEESRERRKLEEEE) is disordered. The span at 102-111 (EESRERRKLE) shows a compositional bias: basic and acidic residues. A helical transmembrane segment spans residues 128-148 (LGFGLFGIGSMLFSFWAIYFY). The Mitochondrial intermembrane portion of the chain corresponds to 149–409 (GRPSLDEHGN…KNWTRGFINH (261 aa)). Residues 205 to 348 (YVQPPYTLVL…FELTSFLSVL (144 aa)) form the FCP1 homology domain.

Belongs to the TIM50 family. As to quaternary structure, component of the TIM23 complex at least composed of Tim23, Tim17 (Tim17a1, Tim17a2 or Tim17b1) and a Tim50. Exclusively expressed in the testis.

The protein resides in the mitochondrion inner membrane. Functionally, essential component of the TIM23 complex, a complex that mediates the translocation of transit peptide-containing proteins across the mitochondrial inner membrane. This chain is Mitochondrial import inner membrane translocase subunit TIM50-B (ttm2), found in Drosophila melanogaster (Fruit fly).